A 157-amino-acid chain; its full sequence is 2-C-methyl-D-erythritol 2,4-cyclodiphosphate synthase (157 aa).

The a divalent metal cation site is built by aspartate 9 and histidine 11. 4-CDP-2-C-methyl-D-erythritol 2-phosphate is bound by residues 9 to 11 (DVH) and 35 to 36 (HS). Histidine 43 contacts a divalent metal cation. 4-CDP-2-C-methyl-D-erythritol 2-phosphate-binding positions include 57 to 59 (DIG), phenylalanine 140, and arginine 143.

This sequence belongs to the IspF family. In terms of assembly, homotrimer. Requires a divalent metal cation as cofactor.

It carries out the reaction 4-CDP-2-C-methyl-D-erythritol 2-phosphate = 2-C-methyl-D-erythritol 2,4-cyclic diphosphate + CMP. It functions in the pathway isoprenoid biosynthesis; isopentenyl diphosphate biosynthesis via DXP pathway; isopentenyl diphosphate from 1-deoxy-D-xylulose 5-phosphate: step 4/6. Its function is as follows. Involved in the biosynthesis of isopentenyl diphosphate (IPP) and dimethylallyl diphosphate (DMAPP), two major building blocks of isoprenoid compounds. Catalyzes the conversion of 4-diphosphocytidyl-2-C-methyl-D-erythritol 2-phosphate (CDP-ME2P) to 2-C-methyl-D-erythritol 2,4-cyclodiphosphate (ME-CPP) with a corresponding release of cytidine 5-monophosphate (CMP). The protein is 2-C-methyl-D-erythritol 2,4-cyclodiphosphate synthase of Caldicellulosiruptor bescii (strain ATCC BAA-1888 / DSM 6725 / KCTC 15123 / Z-1320) (Anaerocellum thermophilum).